The primary structure comprises 156 residues: Small ribosomal subunit protein uS7 (156 aa).

Belongs to the universal ribosomal protein uS7 family. In terms of assembly, part of the 30S ribosomal subunit. Contacts proteins S9 and S11.

Its function is as follows. One of the primary rRNA binding proteins, it binds directly to 16S rRNA where it nucleates assembly of the head domain of the 30S subunit. Is located at the subunit interface close to the decoding center, probably blocks exit of the E-site tRNA. This chain is Small ribosomal subunit protein uS7, found in Janthinobacterium sp. (strain Marseille) (Minibacterium massiliensis).